The primary structure comprises 1440 residues: Genome polyprotein (1440 aa).

A propeptide spans 32-53 (ER anchor for the capsid protein C, removed in mature form by serine protease NS3); it reads GGNEGSIMWLASLAVVIACAGA. The chain crosses the membrane as a helical span at residues 36-56; that stretch reads GSIMWLASLAVVIACAGAMKL. Over 57 to 180 the chain is Extracellular; it reads SNFQGKLLMT…ATRYLMKTEN (124 aa). N-linked (GlcNAc...) asparagine; by host glycosylation occurs at Asn-68. Residues 181 to 201 traverse the membrane as a helical segment; it reads WIVRNPGYAFLAAILGWMLGS. The Cytoplasmic portion of the chain corresponds to 202–207; the sequence is NNGQRR. The helical transmembrane segment at 208 to 222 threads the bilayer; that stretch reads WYFTILLLLVAPAYS. Residues 223–674 are Extracellular-facing; that stretch reads FNCLGMGNRD…QVFGGAFRTL (452 aa). 6 cysteine pairs are disulfide-bonded: Cys-225–Cys-252, Cys-282–Cys-338, Cys-282–Cys-343, Cys-296–Cys-327, Cys-314–Cys-338, and Cys-314–Cys-343. The tract at residues 320 to 333 is fusion peptide; the sequence is DRGWGNGCGLFGKG. N-linked (GlcNAc...) asparagine; by host glycosylation is present at Asn-376. 2 cysteine pairs are disulfide-bonded: Cys-412-Cys-509 and Cys-526-Cys-557. Residues 675–695 form a helical membrane-spanning segment; sequence FGGMSWITQGLMGALLLWMGV. The Cytoplasmic segment spans residues 696-701; the sequence is NARDRS. A helical transmembrane segment spans residues 702-722; the sequence is IALAFLATGGVLVFLATNVHA. The Extracellular portion of the chain corresponds to 723–1147; it reads DTGCAIDITR…AFAEANSGGD (425 aa). Disulfide bonds link Cys-726-Cys-737, Cys-777-Cys-865, Cys-901-Cys-945, Cys-1002-Cys-1051, Cys-1013-Cys-1034, and Cys-1035-Cys-1038. N-linked (GlcNAc...) asparagine; by host glycans are attached at residues Asn-852 and Asn-929. A helical membrane pass occupies residues 1148–1168; sequence VLHLALIAVFKIQPAFLVMNM. Residues 1169–1178 lie on the Cytoplasmic side of the membrane; that stretch reads LSTRWTNQEN. A helical membrane pass occupies residues 1179-1199; the sequence is VVLVLGAAFFHLASVDLQIGV. Residue His-1200 is a topological domain, lumenal. A helical membrane pass occupies residues 1201–1221; sequence GILNAAAIAWMIVRAITFPTT. Topologically, residues 1222 to 1237 are cytoplasmic; sequence SSVTMPVLALLTPGMR. The chain crosses the membrane as a helical span at residues 1238-1258; the sequence is ALYLDTYRIILLVIGICSLLQ. Residues 1259–1269 are Lumenal-facing; it reads ERKKTMAKKKG. A helical transmembrane segment spans residues 1270-1290; that stretch reads AVLLGLALTSTGWFSPTTIAA. The Cytoplasmic segment spans residues 1291–1302; sequence GLMVCNPNKKRG. Residues 1303-1323 form a helical membrane-spanning segment; it reads WPATEFLSAVGLMFAIVGGLA. Residues 1324–1326 are Lumenal-facing; that stretch reads ELD. Residues 1327 to 1347 form a helical membrane-spanning segment; sequence IESMSIPFMLAGLMAVSYVVS. The Cytoplasmic portion of the chain corresponds to 1348-1404; sequence GKATDMWLERAADISWEMDAAITGSSRRLDVKLDDDGDFHLIDDPGVPWKVWVLRMS. Positions 1355–1394 are interacts with and activates NS3 protease; it reads LERAADISWEMDAAITGSSRRLDVKLDDDGDFHLIDDPGV. Positions 1405–1425 form an intramembrane region, helical; the sequence is CIGLAALTPWAIVPAAFGYWL. The Cytoplasmic segment spans residues 1426 to 1440; that stretch reads TLKTTKRGGVFWDTP.

Homodimer. Interacts (via N-terminus) with host EXOC1 (via C-terminus); this interaction results in EXOC1 degradation through the proteasome degradation pathway. As to quaternary structure, forms heterodimers with envelope protein E in the endoplasmic reticulum and Golgi. In terms of assembly, homodimer; in the endoplasmic reticulum and Golgi. Interacts with protein prM. Interacts with non-structural protein 1. Homodimer; Homohexamer when secreted. Interacts with envelope protein E. NS1 interacts with NS4B. Interacts with host complement protein CFH; this interaction leads to the degradation of C3. As to quaternary structure, interacts (via N-terminus) with serine protease NS3. In terms of assembly, forms a heterodimer with serine protease NS3. May form homooligomers. Forms a heterodimer with NS2B. Interacts with non-structural protein 2A (via N-terminus). Interacts with NS4B. Interacts with unphosphorylated RNA-directed RNA polymerase NS5; this interaction stimulates RNA-directed RNA polymerase NS5 guanylyltransferase activity. The cofactor is Mn(2+). Mg(2+) is required as a cofactor. Specific enzymatic cleavages in vivo yield mature proteins. Cleavages in the lumen of endoplasmic reticulum are performed by host signal peptidase, whereas cleavages in the cytoplasmic side are performed by serine protease NS3. Signal cleavage at the 2K-4B site requires a prior NS3 protease-mediated cleavage at the 4A-2K site. In terms of processing, cleaved in post-Golgi vesicles by a host furin, releasing the mature small envelope protein M, and peptide pr. This cleavage is incomplete as up to 30% of viral particles still carry uncleaved prM. Post-translationally, N-glycosylated. N-glycosylated. The excreted form is glycosylated and this is required for efficient secretion of the protein from infected cells. In terms of processing, RNA-directed RNA polymerase NS5: Phosphorylated on serines residues. This phosphorylation may trigger NS5 nuclear localization.

Its subcellular location is the virion. It is found in the host nucleus. The protein localises to the host cytoplasm. It localises to the host perinuclear region. The protein resides in the secreted. Its subcellular location is the virion membrane. It is found in the host endoplasmic reticulum membrane. It catalyses the reaction Selective hydrolysis of -Xaa-Xaa-|-Yaa- bonds in which each of the Xaa can be either Arg or Lys and Yaa can be either Ser or Ala.. The catalysed reaction is a ribonucleoside 5'-triphosphate + H2O = a ribonucleoside 5'-diphosphate + phosphate + H(+). It carries out the reaction ATP + H2O = ADP + phosphate + H(+). In terms of biological role, plays a role in virus budding by binding to the cell membrane and gathering the viral RNA into a nucleocapsid that forms the core of a mature virus particle. During virus entry, may induce genome penetration into the host cytoplasm after hemifusion induced by the surface proteins. Can migrate to the cell nucleus where it modulates host functions. Overcomes the anti-viral effects of host EXOC1 by sequestering and degrading the latter through the proteasome degradation pathway. Its function is as follows. Inhibits RNA silencing by interfering with host Dicer. Functionally, prevents premature fusion activity of envelope proteins in trans-Golgi by binding to envelope protein E at pH 6.0. After virion release in extracellular space, gets dissociated from E dimers. Acts as a chaperone for envelope protein E during intracellular virion assembly by masking and inactivating envelope protein E fusion peptide. prM is the only viral peptide matured by host furin in the trans-Golgi network probably to avoid catastrophic activation of the viral fusion activity in acidic Golgi compartment prior to virion release. prM-E cleavage is inefficient, and many virions are only partially matured. These uncleaved prM would play a role in immune evasion. In terms of biological role, may play a role in virus budding. Exerts cytotoxic effects by activating a mitochondrial apoptotic pathway through M ectodomain. May display a viroporin activity. Its function is as follows. Binds to host cell surface receptor and mediates fusion between viral and cellular membranes. Envelope protein is synthesized in the endoplasmic reticulum in the form of heterodimer with protein prM. They play a role in virion budding in the ER, and the newly formed immature particle is covered with 60 spikes composed of heterodimer between precursor prM and envelope protein E. The virion is transported to the Golgi apparatus where the low pH causes dissociation of PrM-E heterodimers and formation of E homodimers. prM-E cleavage is inefficient, and many virions are only partially matured. These uncleaved prM would play a role in immune evasion. Functionally, involved in immune evasion, pathogenesis and viral replication. Once cleaved off the polyprotein, is targeted to three destinations: the viral replication cycle, the plasma membrane and the extracellular compartment. Essential for viral replication. Required for formation of the replication complex and recruitment of other non-structural proteins to the ER-derived membrane structures. Excreted as a hexameric lipoparticle that plays a role against host immune response. Antagonizing the complement function. Binds to the host macrophages and dendritic cells. Inhibits signal transduction originating from Toll-like receptor 3 (TLR3). Component of the viral RNA replication complex that functions in virion assembly and antagonizes the host alpha/beta interferon antiviral response. In terms of biological role, required cofactor for the serine protease function of NS3. May have membrane-destabilizing activity and form viroporins. Its function is as follows. Displays three enzymatic activities: serine protease, NTPase and RNA helicase. NS3 serine protease, in association with NS2B, performs its autocleavage and cleaves the polyprotein at dibasic sites in the cytoplasm: C-prM, NS2A-NS2B, NS2B-NS3, NS3-NS4A, NS4A-2K and NS4B-NS5. NS3 RNA helicase binds RNA and unwinds dsRNA in the 3' to 5' direction. Functionally, non-structural protein 4A: Regulates the ATPase activity of the NS3 helicase activity. NS4A allows NS3 helicase to conserve energy during unwinding. Peptide 2k: Functions as a signal peptide for NS4B and is required for the interferon antagonism activity of the latter. In terms of biological role, non-structural protein 4B: Induces the formation of ER-derived membrane vesicles where the viral replication takes place. Inhibits interferon (IFN)-induced host STAT1 phosphorylation and nuclear translocation, thereby preventing the establishment of cellular antiviral state by blocking the IFN-alpha/beta pathway. Inhibits STAT2 translocation in the nucleus after IFN-alpha treatment. Its function is as follows. RNA-directed RNA polymerase NS5: Replicates the viral (+) and (-) RNA genome. Performs the capping of genomes in the cytoplasm. NS5 methylates viral RNA cap at guanine N-7 and ribose 2'-O positions. Besides its role in RNA genome replication, also prevents the establishment of cellular antiviral state by blocking the interferon-alpha/beta (IFN-alpha/beta) signaling pathway. Inhibits host TYK2 and STAT2 phosphorylation, thereby preventing activation of JAK-STAT signaling pathway. This chain is Genome polyprotein, found in Japanese encephalitis virus (strain Nakayama) (JEV).